A 96-amino-acid chain; its full sequence is Co-chaperonin GroES (96 aa).

It belongs to the GroES chaperonin family. Heptamer of 7 subunits arranged in a ring. Interacts with the chaperonin GroEL.

The protein localises to the cytoplasm. Functionally, together with the chaperonin GroEL, plays an essential role in assisting protein folding. The GroEL-GroES system forms a nano-cage that allows encapsulation of the non-native substrate proteins and provides a physical environment optimized to promote and accelerate protein folding. GroES binds to the apical surface of the GroEL ring, thereby capping the opening of the GroEL channel. This is Co-chaperonin GroES from Geotalea uraniireducens (strain Rf4) (Geobacter uraniireducens).